Consider the following 546-residue polypeptide: SusD-like protein BACOVA_02651 (546 aa).

Positions 1 to 21 (MRIFMKSKLLVIATTALLFAA) are cleaved as a signal peptide. The N-palmitoyl cysteine moiety is linked to residue Cys22. The S-diacylglycerol cysteine moiety is linked to residue Cys22.

Belongs to the SusD family.

The protein localises to the cell outer membrane. Its pathway is glucan metabolism; xyloglucan degradation. Functionally, polysaccharide-binding protein present at the surface of the cell. Probably mediates xyloglucan-binding before xyloglucan transport in the periplasm for degradation. The polypeptide is SusD-like protein BACOVA_02651 (Bacteroides ovatus (strain ATCC 8483 / DSM 1896 / JCM 5824 / BCRC 10623 / CCUG 4943 / NCTC 11153)).